The primary structure comprises 530 residues: White collar 2 protein (530 aa).

7 consecutive repeat copies span residues 9–12 (GSSM), 21–24 (GSGM), 25–28 (GSGM), 29–32 (GSGM), 33–36 (GTGM), 37–40 (GTGM), and 41–44 (GTGM). The segment at 9–44 (GSSMYGFGAMGMGSGMGSGMGSGMGTGMGTGMGTGM) is 7 X 4 AA repeats of G-[SAT]-G-M. A disordered region spans residues 134–158 (IATPTTTTSGPSGGPSSGGGSTLTE). Positions 144 to 154 (PSGGPSSGGGS) are enriched in gly residues. A PAS domain is found at 162–232 (RRNWPAKVVE…AELNEAIATG (71 aa)). The disordered stretch occupies residues 315-343 (REEQEEQEESHRTWRMSQEGRSDVTPSDD). Residues 468–493 (CTDCGTLDSPEWRKGPSGPKTLCNAC) form a GATA-type zinc finger. The segment at 504–530 (KNANNNNNGGGIGGHNDIHTPMGDHMG) is disordered.

In terms of assembly, heterodimer of wc-1 and wc-2 (Potential). Binds to DNA.

It is found in the nucleus. May function as a transcription factor involved in light regulation. Binds and affects blue light regulation of the al-3 gene. Wc-1 and wc-2 interact via homologous PAS domains, bind to promoters of light regulated genes such as frq, and activate transcription. May bind directly to frq. The protein is White collar 2 protein (wc-2) of Neurospora crassa (strain ATCC 24698 / 74-OR23-1A / CBS 708.71 / DSM 1257 / FGSC 987).